The following is a 75-amino-acid chain: Dermaseptin-S11 (75 aa).

The signal sequence occupies residues 1–22; the sequence is MAFLKKSLFLVLFLGMVSLSIC. A propeptide spanning residues 23–45 is cleaved from the precursor; sequence EEEKRENEDEEEQEDDEQSEEKR. The interval 25-44 is disordered; the sequence is EKRENEDEEEQEDDEQSEEK. A compositionally biased stretch (acidic residues) spans 30-41; that stretch reads EDEEEQEDDEQS.

Belongs to the frog skin active peptide (FSAP) family. Dermaseptin subfamily. Expressed by the skin glands.

It localises to the secreted. The protein localises to the target cell membrane. Its function is as follows. Antimicrobial peptide with activity against Gram-positive and Gram-negative bacteria, and fungi. Has hemolytic activity. This Phyllomedusa sauvagei (Sauvage's leaf frog) protein is Dermaseptin-S11.